Here is a 408-residue protein sequence, read N- to C-terminus: Serine/threonine-protein kinase ATG1t (408 aa).

The Protein kinase domain maps to 7–272 (YIAKSKLSES…GRIKNSRVWV (266 aa)). ATP is bound by residues 13 to 21 (LSESLTSTV) and Lys-36. The Proton acceptor role is filled by Asp-129.

Belongs to the protein kinase superfamily. Ser/Thr protein kinase family.

The protein localises to the cytoplasmic vesicle. Its subcellular location is the autophagosome. Functionally, serine/threonine protein kinase involved in autophagy. The ATG1-ATG13 protein kinase complex regulates downstream events required for autophagosome enclosure and/or vacuolar delivery. This chain is Serine/threonine-protein kinase ATG1t, found in Arabidopsis thaliana (Mouse-ear cress).